The primary structure comprises 142 residues: Transcriptional regulator MraZ (142 aa).

2 SpoVT-AbrB domains span residues 5–47 (EYPY…PLPG) and 76–119 (ASKA…NPQR).

The protein belongs to the MraZ family. As to quaternary structure, forms oligomers.

The protein localises to the cytoplasm. Its subcellular location is the nucleoid. The polypeptide is Transcriptional regulator MraZ (Deinococcus radiodurans (strain ATCC 13939 / DSM 20539 / JCM 16871 / CCUG 27074 / LMG 4051 / NBRC 15346 / NCIMB 9279 / VKM B-1422 / R1)).